A 186-amino-acid chain; its full sequence is Nicotinamide-nucleotide adenylyltransferase (186 aa).

The protein belongs to the archaeal NMN adenylyltransferase family.

The protein resides in the cytoplasm. The enzyme catalyses beta-nicotinamide D-ribonucleotide + ATP + H(+) = diphosphate + NAD(+). The protein operates within cofactor biosynthesis; NAD(+) biosynthesis; NAD(+) from nicotinamide D-ribonucleotide: step 1/1. In Thermococcus sibiricus (strain DSM 12597 / MM 739), this protein is Nicotinamide-nucleotide adenylyltransferase.